A 238-amino-acid chain; its full sequence is Doublecortin domain-containing protein (238 aa).

Residues V82 to S112 form a partial p25alpha domain region. A Doublecortin domain is found at K151–L232.

Interacts with alpha-tubulin 1 and beta-tubulin; the interaction stabilizes microtubule assembly.

The protein localises to the cytoplasm. It localises to the cytoskeleton. Its function is as follows. Involved in the stabilization of microtubules. Probably by controlling microtubules stabilization, plays a role in invasion, microneme secretion and parasite growth in host erythrocytes. The protein is Doublecortin domain-containing protein of Plasmodium falciparum (isolate 3D7).